A 257-amino-acid polypeptide reads, in one-letter code: Phosphonates import ATP-binding protein PhnC (257 aa).

One can recognise an ABC transporter domain in the interval 4-248 (IKFKNVSKVY…VFSKIYGRTI (245 aa)). An ATP-binding site is contributed by 37 to 44 (GLSGAGKS).

The protein belongs to the ABC transporter superfamily. Phosphonates importer (TC 3.A.1.9.1) family. In terms of assembly, the complex is composed of two ATP-binding proteins (PhnC), two transmembrane proteins (PhnE) and a solute-binding protein (PhnD).

It localises to the cell membrane. The enzyme catalyses phosphonate(out) + ATP + H2O = phosphonate(in) + ADP + phosphate + H(+). Functionally, part of the ABC transporter complex PhnCDE involved in phosphonates import. Responsible for energy coupling to the transport system. This chain is Phosphonates import ATP-binding protein PhnC, found in Staphylococcus aureus (strain MRSA252).